A 231-amino-acid chain; its full sequence is 26S proteasome non-ATPase regulatory subunit 10 (231 aa).

ANK repeat units lie at residues 3–36 (GCVSNLMVCNLAYNGKLDELKESILADKSLATRT), 37–69 (DQDSRTALHWACSAGHTEIVEFLLQLGVPVNEK), 70–102 (DDAGWSPLHIAASAGRDEIVKALLIKGAQVNAV), 103–135 (NQNGCTALHYAASKNRHEIAVMLLEGGANPDAK), 136–168 (NHYDATAMHRAAAKGNLKMVHILLFYKASTNIQ), 169–201 (DTEGNTPLHLACDEERVEEAKLLVTQGASIYIE), and 202–226 (NKEEKTPLQVAKGGLGLILKRIAES).

Part of transient complex containing PSMD10, PSMC4, PSMC5 and PAAF1 formed during the assembly of the 26S proteasome. Stays associated throughout the assembly of the PA700/19S RC and is released upon association with the 20S core. Interacts with PSMC4. Interacts with RB1. Interacts with CDK4. Interacts with MDM2. Interacts with RELA. Associates with a CDK4:CCND2 serine/threonine kinase complex. Interacts with ARHGDIA and increases the interaction between ARHGDIA and RHOA, hence promotes ARHGDIA inactivation of RHOA and ROCK.

Its subcellular location is the cytoplasm. It is found in the nucleus. In terms of biological role, acts as a chaperone during the assembly of the 26S proteasome, specifically of the PA700/19S regulatory complex (RC). In the initial step of the base subcomplex assembly is part of an intermediate PSMD10:PSMC4:PSMC5:PAAF1 module which probably assembles with a PSMD5:PSMC2:PSMC1:PSMD2 module. Independently of the proteasome, regulates EGF-induced AKT activation through inhibition of the RHOA/ROCK/PTEN pathway, leading to prolonged AKT activation. Plays an important role in RAS-induced tumorigenesis. Its function is as follows. Acts as an oncoprotein by being involved in negative regulation of tumor suppressors RB1 and p53/TP53. Overexpression is leading to phosphorylation of RB1 and proteasomal degradation of RB1. Regulates CDK4-mediated phosphorylation of RB1 by competing with CDKN2A for binding with CDK4. Facilitates binding of MDM2 to p53/TP53 and the mono- and polyubiquitination of p53/TP53 by MDM2 suggesting a function in targeting the TP53:MDM2 complex to the 26S proteasome. Involved in p53-independent apoptosis. Involved in regulation of NF-kappa-B by retaining it in the cytoplasm. Binds to the NF-kappa-B component RELA and accelerates its XPO1/CRM1-mediated nuclear export. The sequence is that of 26S proteasome non-ATPase regulatory subunit 10 (Psmd10) from Rattus norvegicus (Rat).